Reading from the N-terminus, the 96-residue chain is Interleukin-8 (96 aa).

The N-terminal stretch at 1–22 (MTSKLAIALLATFMLSAALCEA) is a signal peptide. Arginine 27 bears the Citrulline mark. 2 disulfides stabilise this stretch: cysteine 34–cysteine 61 and cysteine 36–cysteine 78.

The protein belongs to the intercrine alpha (chemokine CxC) family. As to quaternary structure, homodimer. Interacts with TNFAIP6 (via Link domain); this interaction interferes with chemokine binding to glycosaminoglycans. Post-translationally, citrullination at Arg-27 prevents proteolysis, and dampens tissue inflammation, it also enhances leukocytosis, possibly through impaired chemokine clearance from the blood circulation.

Its subcellular location is the secreted. In terms of biological role, chemotactic factor that mediates inflammatory response by attracting neutrophils, basophils, and T-cells to clear pathogens and protect the host from infection. Also plays an important role in neutrophil activation. Released in response to an inflammatory stimulus, exerts its effect by binding to the G-protein-coupled receptors CXCR1 and CXCR2, primarily found in neutrophils, monocytes and endothelial cells. G-protein heterotrimer (alpha, beta, gamma subunits) constitutively binds to CXCR1/CXCR2 receptor and activation by IL8 leads to beta and gamma subunits release from Galpha (GNAI2 in neutrophils) and activation of several downstream signaling pathways including PI3K and MAPK pathways. In Dasypus novemcinctus (Nine-banded armadillo), this protein is Interleukin-8 (CXCL8).